The primary structure comprises 1183 residues: Phospholipid-transporting ATPase FetA (1183 aa).

The next 3 helical transmembrane spans lie at 96 to 116 (ISSL…SITG), 299 to 319 (VLVV…SIGH), and 348 to 368 (ALIF…SLYV). Catalysis depends on Asp416, which acts as the 4-aspartylphosphate intermediate. 12 residues coordinate ATP: Asp416, Lys417, Thr418, Glu519, Phe560, Lys583, Arg617, Thr697, Gly698, Asp699, Arg812, and Lys818. Mg(2+) is bound at residue Asp416. Thr418 is a binding site for Mg(2+). Asp838 lines the Mg(2+) pocket. ATP is bound by residues Asn841 and Asp842. Asp842 lines the Mg(2+) pocket. A run of 6 helical transmembrane segments spans residues 904-924 (FAFT…AQTV), 927-947 (IWFI…GLSL), 981-1001 (CLLH…GTVF), 1014-1034 (FQSF…MQIA), 1049-1069 (WGSL…GLCL), and 1090-1110 (IWLC…GYNF).

Belongs to the cation transport ATPase (P-type) (TC 3.A.3) family. Type IV subfamily. The cofactor is Mg(2+). As to expression, highly expressed in testis.

The protein resides in the cytoplasmic vesicle. The protein localises to the secretory vesicle. It localises to the acrosome membrane. The enzyme catalyses ATP + H2O + phospholipidSide 1 = ADP + phosphate + phospholipidSide 2.. In terms of biological role, P4-ATPase flippase which catalyzes the hydrolysis of ATP coupled to the transport of aminophospholipids from the outer to the inner leaflet of various membranes and ensures the maintenance of asymmetric distribution of phospholipids. Phospholipid translocation also seems to be implicated in vesicle formation and in uptake of lipid signaling molecules. May play a role in phospholid transport across membranes and in acrosome formation. The sequence is that of Phospholipid-transporting ATPase FetA (Atp8b5) from Mus musculus (Mouse).